Consider the following 365-residue polypeptide: DNA replication and repair protein RecF (365 aa).

Residue Gly-30–Thr-37 participates in ATP binding.

It belongs to the RecF family.

The protein localises to the cytoplasm. Functionally, the RecF protein is involved in DNA metabolism; it is required for DNA replication and normal SOS inducibility. RecF binds preferentially to single-stranded, linear DNA. It also seems to bind ATP. This is DNA replication and repair protein RecF from Leptospira interrogans serogroup Icterohaemorrhagiae serovar Lai (strain 56601).